Consider the following 274-residue polypeptide: Deoxyribonuclease TATDN3 (274 aa).

Residues His-12, His-14, Glu-107, His-147, His-170, and Asp-218 each coordinate Zn(2+).

Belongs to the metallo-dependent hydrolases superfamily. TatD-type hydrolase family. Requires Mn(2+) as cofactor. The cofactor is Ca(2+). It depends on Mg(2+) as a cofactor. Zn(2+) serves as cofactor.

It is found in the nucleus. With respect to regulation, the 3'-exonuclease activity is sensitive to the metal ion present in the active site, whereas the AP endodeoxyribonuclease activity is observed in a variety of divalent metal cofactors. 3'-exoxonuclease activity is suppressed in the presence of Ca(2+), Zn(2+) and Ni(2+). Its function is as follows. Exhibits 3'-exonuclease activities and apurinic/apyrimidinic (AP) endonuclease (in vitro). Show preferential AP endonuclease activity on double-stranded DNA substrates and 3'- exonuclease activity on single-stranded DNA. The protein is Deoxyribonuclease TATDN3 (TATDN3) of Homo sapiens (Human).